Consider the following 1192-residue polypeptide: Reticulon-4 (1192 aa).

N-acetylmethionine is present on Met1. The interval 1-204 (MEDLDQSPLV…ASEPVIRSSA (204 aa)) is disordered. Residues 1-1018 (MEDLDQSPLV…LYWRDIKKTG (1018 aa)) are Cytoplasmic-facing. A phosphoserine mark is found at Ser7 and Ser15. The segment covering 31–53 (PEDEEEEEEEEEEDEDEDLEELE) has biased composition (acidic residues). A compositionally biased stretch (low complexity) spans 65 to 77 (AAPVPTAPAAGAP). The segment covering 87 to 101 (PPAPRGPLPAAPPVA) has biased composition (pro residues). The residue at position 107 (Ser107) is a Phosphoserine. Over residues 110–132 (PSPVSSTVPAPSPLSAAAVSPSK) the composition is skewed to low complexity. The segment covering 141 to 150 (ARPPPPPPAS) has biased composition (pro residues). Position 152 is a phosphoserine (Ser152). Residues 159 to 173 (WTPPAPAPAAPPSTP) are compositionally biased toward pro residues. Phosphoserine is present on residues Ser181, Ser182, Ser184, Ser361, and Ser446. The disordered stretch occupies residues 427 to 458 (DSLEQTNHEKDSESSNDDTSFPSTPEGIKDRS). A Phosphothreonine modification is found at Thr450. A Phosphoserine modification is found at Ser511. Positions 722 to 734 (AKVEQPVPDHSEL) are enriched in basic and acidic residues. Residues 722 to 762 (AKVEQPVPDHSELVEDSSPDSEPVDLFSDDSIPDVPQKQDE) form a disordered region. The segment covering 735 to 753 (VEDSSPDSEPVDLFSDDSI) has biased composition (acidic residues). Phosphoserine is present on Ser749. Thr858 carries the post-translational modification Phosphothreonine. A phosphoserine mark is found at Ser881 and Ser991. One can recognise a Reticulon domain in the interval 1005–1192 (VVDLLYWRDI…KIPGLKRKAE (188 aa)). The chain crosses the membrane as a helical span at residues 1019 to 1039 (VVFGASLFLLLSLTVFSIVSV). The Lumenal segment spans residues 1040 to 1133 (TAYIALALLS…LMWVFTYVGA (94 aa)). Lys1104 is modified (N6-acetyllysine). The helical transmembrane segment at 1134-1154 (LFNGLTLLILALISLFSVPVI) threads the bilayer. Residues 1155–1192 (YERHQAQIDHYLGLANKNVKDAMAKIQAKIPGLKRKAE) are Cytoplasmic-facing.

As to quaternary structure, binds to RTN4R. Interacts with ATL1. Interacts with TMEM170A. Interacts with RTN4IP1. In terms of assembly, interacts in trans with CNTNAP1. Interacts with REEP5. Interacts with synaptic plasticity regulator PANTS; the interaction results in enhanced RTN4-mediated inhibition of AMPA receptor clustering. Interacts with GPR50. Homodimer. Interacts with BAD/Bcl-xl and BCL2. Interact with RTN3. Interacts with NGBR. Interacts with SPTLC1. Interacts with GRAMD4. Interacts with CDH5. Interacts with BACE1 and BACE2. Interacts with REEP5. Interacts with RETREG3. As to quaternary structure, interacts with BACE1 and BACE2. Interacts with TMEM33. In terms of tissue distribution, isoform A: is specifically expressed in brain and testis and weakly in heart and skeletal muscle. Isoform B: widely expressed except for the liver. Highly expressed in endothelial cells and vascular smooth muscle cells, including blood vessels and mesenteric arteries. Isoform C: is expressed in brain, skeletal muscle and adipocytes. Isoform D is testis-specific.

The protein resides in the endoplasmic reticulum membrane. It localises to the cell membrane. It is found in the synapse. The protein localises to the cell junction. In terms of biological role, required to induce the formation and stabilization of endoplasmic reticulum (ER) tubules. They regulate membrane morphogenesis in the ER by promoting tubular ER production. They influence nuclear envelope expansion, nuclear pore complex formation and proper localization of inner nuclear membrane proteins. However each isoform have specific functions mainly depending on their tissue expression specificities. Its function is as follows. Developmental neurite growth regulatory factor with a role as a negative regulator of axon-axon adhesion and growth, and as a facilitator of neurite branching. Regulates neurite fasciculation, branching and extension in the developing nervous system. Involved in down-regulation of growth, stabilization of wiring and restriction of plasticity in the adult CNS. Regulates the radial migration of cortical neurons via an RTN4R-LINGO1 containing receptor complex. Acts as a negative regulator of central nervous system angiogenesis. Inhibits spreading, migration and sprouting of primary brain microvascular endothelial cells (MVECs). Also induces the retraction of MVECs lamellipodia and filopodia in a ROCK pathway-dependent manner. Functionally, mainly function in endothelial cells and vascular smooth muscle cells, is also involved in immune system regulation. Modulator of vascular remodeling, promotes the migration of endothelial cells but inhibits the migration of vascular smooth muscle cells. Regulates endothelial sphingolipid biosynthesis with direct effects on vascular function and blood pressure. Inhibits serine palmitoyltransferase, SPTLC1, the rate-limiting enzyme of the novo sphingolipid biosynthetic pathway, thereby controlling production of endothelial sphingosine-1-phosphate (S1P). Required to promote macrophage homing and functions such as cytokine/chemokine gene expression involved in angiogenesis, arteriogenesis and tissue repair. Mediates ICAM1 induced transendothelial migration of leukocytes such as monocytes and neutrophils and acute inflammation. Necessary for immune responses triggered by nucleic acid sensing TLRs, such as TLR9, is required for proper TLR9 location to endolysosomes. Also involved in immune response to LPS. Plays a role in liver regeneration through the modulation of hepatocytes proliferation. Reduces the anti-apoptotic activity of Bcl-xl and Bcl-2. This is likely consecutive to their change in subcellular location, from the mitochondria to the endoplasmic reticulum, after binding and sequestration. With isoform C, inhibits BACE1 activity and amyloid precursor protein processing. Regulates cardiomyocyte apoptosis upon hypoxic conditions. With isoform B, inhibits BACE1 activity and amyloid precursor protein processing. This is Reticulon-4 from Homo sapiens (Human).